Here is a 317-residue protein sequence, read N- to C-terminus: Transaldolase (317 aa).

Lysine 132 acts as the Schiff-base intermediate with substrate in catalysis.

It belongs to the transaldolase family. Type 1 subfamily. In terms of assembly, homodimer.

Its subcellular location is the cytoplasm. The enzyme catalyses D-sedoheptulose 7-phosphate + D-glyceraldehyde 3-phosphate = D-erythrose 4-phosphate + beta-D-fructose 6-phosphate. It participates in carbohydrate degradation; pentose phosphate pathway; D-glyceraldehyde 3-phosphate and beta-D-fructose 6-phosphate from D-ribose 5-phosphate and D-xylulose 5-phosphate (non-oxidative stage): step 2/3. Its function is as follows. Transaldolase is important for the balance of metabolites in the pentose-phosphate pathway. This Pseudoalteromonas atlantica (strain T6c / ATCC BAA-1087) protein is Transaldolase.